A 194-amino-acid chain; its full sequence is BCL2/adenovirus E1B 19 kDa protein-interacting protein 3 (194 aa).

Residues 1-102 form a disordered region; it reads MSQNGAPGMQ…SQSEEDDIER (102 aa). A compositionally biased stretch (basic and acidic residues) spans 42–55; sequence DMEKILLDAQHESG. Serine 54, serine 66, serine 86, serine 92, and serine 95 each carry phosphoserine. Low complexity predominate over residues 56-69; that stretch reads RSSSKSSHCDSPPR. Residues 78-88 are compositionally biased toward basic and acidic residues; the sequence is RASETDTHSIG. A BH3 motif is present at residues 100-125; that stretch reads IERRKEVESILKKNSDWIWDWSSRPE. The helical transmembrane segment at 164–184 threads the bilayer; that stretch reads VFLPSLLLSHLLAIGLGIYIG.

Belongs to the NIP3 family. Homodimer. Binds to BCL2. Interacts with BNIP3L and ACAA2. Interacts (via BH3 domain) with SPATA18 (via coiled-coil domains). Interacts with BOK; promotes BOK oligomerization. Interacts with PPTC7; this interaction promotes BNIP3 degradation. As to quaternary structure, (Microbial infection) Interacts with adenovirus E1B 19 kDa protein. In terms of assembly, (Microbial infection) Interacts with Epstein-Barr virus BHRF1.

It localises to the mitochondrion. It is found in the mitochondrion outer membrane. In terms of biological role, apoptosis-inducing protein that can overcome BCL2 suppression. May play a role in repartitioning calcium between the two major intracellular calcium stores in association with BCL2. Involved in mitochondrial quality control via its interaction with SPATA18/MIEAP: in response to mitochondrial damage, participates in mitochondrial protein catabolic process (also named MALM) leading to the degradation of damaged proteins inside mitochondria. The physical interaction of SPATA18/MIEAP, BNIP3 and BNIP3L/NIX at the mitochondrial outer membrane regulates the opening of a pore in the mitochondrial double membrane in order to mediate the translocation of lysosomal proteins from the cytoplasm to the mitochondrial matrix. Plays an important role in the calprotectin (S100A8/A9)-induced cell death pathway. In Homo sapiens (Human), this protein is BCL2/adenovirus E1B 19 kDa protein-interacting protein 3.